Reading from the N-terminus, the 345-residue chain is N-acetyl-gamma-glutamyl-phosphate reductase (345 aa).

Cys-149 is an active-site residue.

This sequence belongs to the NAGSA dehydrogenase family. Type 1 subfamily.

It localises to the cytoplasm. It catalyses the reaction N-acetyl-L-glutamate 5-semialdehyde + phosphate + NADP(+) = N-acetyl-L-glutamyl 5-phosphate + NADPH + H(+). It participates in amino-acid biosynthesis; L-arginine biosynthesis; N(2)-acetyl-L-ornithine from L-glutamate: step 3/4. Its function is as follows. Catalyzes the NADPH-dependent reduction of N-acetyl-5-glutamyl phosphate to yield N-acetyl-L-glutamate 5-semialdehyde. The polypeptide is N-acetyl-gamma-glutamyl-phosphate reductase (Bacillus mycoides (strain KBAB4) (Bacillus weihenstephanensis)).